A 419-amino-acid chain; its full sequence is Peroxisomal membrane protein PMP47B (419 aa).

Solcar repeat units lie at residues 6-120 (YDDL…TGKT), 142-230 (LSVW…LKSF), and 239-369 (VTPV…LLIL). The chain crosses the membrane as a helical span at residues 12–32 (AFAGAGGGLLSMTLTYPLVTL). Over residues 44–53 (KNEEEEKENS) the composition is skewed to basic and acidic residues. Residues 44–69 (KNEEEEKENSNEDGSLSPKSSNTSNI) form a disordered region. A compositionally biased stretch (polar residues) spans 56 to 69 (DGSLSPKSSNTSNI). The next 3 helical transmembrane spans lie at 98–118 (SALF…ELTG), 204–224 (FTGI…YTIF), and 245–265 (LLLG…YITL). Residues 274-305 (MTENNEDSEKERTDSVQSLPEDGSDEDNSKEN) form a disordered region. The next 2 helical transmembrane spans lie at 310–330 (TINK…IIGY) and 349–369 (LLQS…LLIL).

The protein belongs to the mitochondrial carrier (TC 2.A.29) family.

It localises to the peroxisome membrane. May have transport activity. This Candida boidinii (Yeast) protein is Peroxisomal membrane protein PMP47B (PMP47B).